Here is a 219-residue protein sequence, read N- to C-terminus: Ribose-5-phosphate isomerase A (219 aa).

Residues 28–31 (TGST), 81–84 (DGAD), and 94–97 (KGGG) each bind substrate. The active-site Proton acceptor is the Glu103. Lys121 provides a ligand contact to substrate.

The protein belongs to the ribose 5-phosphate isomerase family. Homodimer.

It carries out the reaction aldehydo-D-ribose 5-phosphate = D-ribulose 5-phosphate. It functions in the pathway carbohydrate degradation; pentose phosphate pathway; D-ribose 5-phosphate from D-ribulose 5-phosphate (non-oxidative stage): step 1/1. Its function is as follows. Catalyzes the reversible conversion of ribose-5-phosphate to ribulose 5-phosphate. This Shewanella loihica (strain ATCC BAA-1088 / PV-4) protein is Ribose-5-phosphate isomerase A.